The sequence spans 294 residues: uncharacterized protein (294 aa).

Positions 1-16 are cleaved as a signal peptide; sequence MQNFMVLLLLIVAVVA. N-linked (GlcNAc...) asparagine; by host glycosylation is found at N25 and N162.

This is an uncharacterized protein from Acheta domesticus (House cricket).